We begin with the raw amino-acid sequence, 235 residues long: tRNA (guanine-N(1)-)-methyltransferase (235 aa).

Residues Gly113 and Ile133–Leu138 each bind S-adenosyl-L-methionine.

This sequence belongs to the RNA methyltransferase TrmD family. In terms of assembly, homodimer.

It is found in the cytoplasm. The enzyme catalyses guanosine(37) in tRNA + S-adenosyl-L-methionine = N(1)-methylguanosine(37) in tRNA + S-adenosyl-L-homocysteine + H(+). Its function is as follows. Specifically methylates guanosine-37 in various tRNAs. The protein is tRNA (guanine-N(1)-)-methyltransferase of Wolbachia sp. subsp. Brugia malayi (strain TRS).